Reading from the N-terminus, the 65-residue chain is Metallothionein-like protein type 3 (65 aa).

It belongs to the metallothionein superfamily. Type 15 family.

Functionally, metallothioneins have a high content of cysteine residues that bind various heavy metals. The polypeptide is Metallothionein-like protein type 3 (Carica papaya (Papaya)).